Consider the following 133-residue polypeptide: Small ribosomal subunit protein bS6 (133 aa).

Residues 93–133 (KTAVTEPSPMMKEEPRRERRDDSAPRQERAEKKTETTEDNA) are disordered. Over residues 103–133 (MKEEPRRERRDDSAPRQERAEKKTETTEDNA) the composition is skewed to basic and acidic residues.

Belongs to the bacterial ribosomal protein bS6 family.

Its function is as follows. Binds together with bS18 to 16S ribosomal RNA. This Alteromonas mediterranea (strain DSM 17117 / CIP 110805 / LMG 28347 / Deep ecotype) protein is Small ribosomal subunit protein bS6.